The chain runs to 219 residues: MEWSEIFHDITERHDFKEMHDFLEKEYTTQTIYPDRDNIYQAFDLTPFEDVKVVILGQDPYHGPNQAHGLAFSVQPSAKFPPSLRNMYQELEDDIGCHRTSPHLQDWAREGVLLLNTVLTVRQGQAHSHKDIGWETFTDEVIQAISKYRDDVVFILWGKPAQQKIKLIDTSKHYIIKSPHPSPLSAYRGFFGSKPYSKTNDYLVSKGKSPINWCENGED.

Aspartate 59 functions as the Proton acceptor in the catalytic mechanism.

This sequence belongs to the uracil-DNA glycosylase (UDG) superfamily. UNG family.

Its subcellular location is the cytoplasm. It catalyses the reaction Hydrolyzes single-stranded DNA or mismatched double-stranded DNA and polynucleotides, releasing free uracil.. In terms of biological role, excises uracil residues from the DNA which can arise as a result of misincorporation of dUMP residues by DNA polymerase or due to deamination of cytosine. The protein is Uracil-DNA glycosylase of Staphylococcus haemolyticus (strain JCSC1435).